The chain runs to 172 residues: Small ribosomal subunit protein uS13c (172 aa).

A chloroplast-targeting transit peptide spans 1–47 (MAHTLATPVAPSVSLICNTKLSVSLSSSSLAFRPVNPKNGGGLSIKC).

As to quaternary structure, component of the chloroplast small ribosomal subunit (SSU). Mature 70S chloroplast ribosomes of higher plants consist of a small (30S) and a large (50S) subunit. The 30S small subunit contains 1 molecule of ribosomal RNA (16S rRNA) and 24 different proteins. The 50S large subunit contains 3 rRNA molecules (23S, 5S and 4.5S rRNA) and 33 different proteins. uS13c interacts with translation factor pY (PSRP1).

The protein resides in the plastid. It localises to the chloroplast. In terms of biological role, component of the chloroplast ribosome (chloro-ribosome), a dedicated translation machinery responsible for the synthesis of chloroplast genome-encoded proteins, including proteins of the transcription and translation machinery and components of the photosynthetic apparatus. This chain is Small ribosomal subunit protein uS13c (RPS13), found in Spinacia oleracea (Spinach).